The following is a 305-amino-acid chain: ATP synthase subunit gamma, mitochondrial (305 aa).

The protein belongs to the ATPase gamma chain family. F-type ATPases have 2 components, F(1) - the catalytic core - and F(o) - the membrane proton channel. F(1) has five subunits: alpha(3), beta(3), gamma(1), delta(1), epsilon(1), plus the additional subunit P18 (Tb427.05.1710) that is not present in F(1)F(o) ATP synthase from metazoa. Subunit P18 (Tb927.5.1710) interacts with the alpha subunit with a 1:1 stoichiometry; the interaction is direct. Subunit gamma is part of the central stalk. F(o) has three main subunits: a, b and c. The trypanosomal ATPase complex contains additional subunits that are not present in the F(1)F(o) ATP synthase from metazoa.

It is found in the mitochondrion. It localises to the mitochondrion inner membrane. Functionally, mitochondrial membrane ATP synthase (F(1)F(o) ATP synthase) produces ATP from ADP in the presence of a proton gradient across the membrane which is generated by electron transport complexes of the respiratory chain. F-type ATPases consist of two structural domains, F(1) - containing the extramembraneous catalytic core, and F(o) - containing the membrane proton channel, linked together by a central stalk and a peripheral stalk. During catalysis, ATP synthesis in the catalytic domain of F(1) is coupled via a rotary mechanism of the central stalk subunits to proton translocation. Subunits alpha and beta form the catalytic core in F(1). Rotation of the central stalk against the surrounding alpha(3)beta(3) subunits leads to hydrolysis of ATP in three separate catalytic sites on the beta subunits. Contrary to the procyclic, insect form that requires F(1)F(o) ATP synthase for ATP synthesis, the bloodstream form relies on ATP hydrolysis by F(1)F(o) ATP synthase to maintain its mitochondrial membrane potential. This chain is ATP synthase subunit gamma, mitochondrial, found in Trypanosoma brucei brucei.